Consider the following 548-residue polypeptide: 1,3-beta-glucanosyltransferase gel4 (548 aa).

The N-terminal stretch at 1–25 is a signal peptide; that stretch reads MKFVYAAAGASLVGSALATLPVIEA. Asn51 and Asn69 each carry an N-linked (GlcNAc...) asparagine glycan. A disulfide bridge links Cys88 with Cys117. Residues Tyr106, 133-141, Asn174, and Glu175 contribute to the (1,3-beta-D-glucosyl)n site; that span reads SAPSESINR. The Proton donor role is filled by Glu175. An N-linked (GlcNAc...) asparagine glycan is attached at Asn181. Positions 217 and 222 each coordinate (1,3-beta-D-glucosyl)n. Cystine bridges form between Cys231–Cys364, Cys249–Cys280, Cys386–Cys437, Cys395–Cys461, and Cys414–Cys419. Glu277 (nucleophile) is an active-site residue. Tyr309 serves as a coordination point for (1,3-beta-D-glucosyl)n. Asn425 carries an N-linked (GlcNAc...) asparagine glycan. The GPI-like-anchor amidated alanine moiety is linked to residue Ala519. Positions 520–548 are cleaved as a propeptide — removed in mature form; that stretch reads SPMAVKVGNWQFGAYIATALFAGVGMLVL.

This sequence belongs to the glycosyl hydrolase 72 family. In terms of processing, the GPI-like anchor contains a phosphoceramide lipid group.

The protein resides in the cell membrane. Splits internally a 1,3-beta-glucan molecule and transfers the newly generated reducing end (the donor) to the non-reducing end of another 1,3-beta-glucan molecule (the acceptor) forming a 1,3-beta linkage, resulting in the elongation of 1,3-beta-glucan chains in the cell wall. Involved in cell wall morphogenesis. The polypeptide is 1,3-beta-glucanosyltransferase gel4 (gel4) (Aspergillus fumigatus (strain ATCC MYA-4609 / CBS 101355 / FGSC A1100 / Af293) (Neosartorya fumigata)).